Reading from the N-terminus, the 204-residue chain is Protein GrpE (204 aa).

Residues Met1–Ala42 are disordered. The span at Gln23–Ala41 shows a compositional bias: polar residues.

The protein belongs to the GrpE family. As to quaternary structure, homodimer.

The protein resides in the cytoplasm. Its function is as follows. Participates actively in the response to hyperosmotic and heat shock by preventing the aggregation of stress-denatured proteins, in association with DnaK and GrpE. It is the nucleotide exchange factor for DnaK and may function as a thermosensor. Unfolded proteins bind initially to DnaJ; upon interaction with the DnaJ-bound protein, DnaK hydrolyzes its bound ATP, resulting in the formation of a stable complex. GrpE releases ADP from DnaK; ATP binding to DnaK triggers the release of the substrate protein, thus completing the reaction cycle. Several rounds of ATP-dependent interactions between DnaJ, DnaK and GrpE are required for fully efficient folding. This is Protein GrpE from Allorhizobium ampelinum (strain ATCC BAA-846 / DSM 112012 / S4) (Agrobacterium vitis (strain S4)).